Here is a 126-residue protein sequence, read N- to C-terminus: Nuclear transport factor 2B (126 aa).

Ser-2 bears the N-acetylserine mark. The 115-residue stretch at 9 to 123 (VSKAFVEHYY…FYVFNDIFRL (115 aa)) folds into the NTF2 domain.

In terms of assembly, interacts with RAN1. Expressed in roots, stems, leaves and flowers, and, at low levels, in siliques.

Its subcellular location is the cytoplasm. It localises to the nucleus. It is found in the nucleus envelope. Functionally, facilitates protein transport into the nucleus. Interacts with various nucleoporins and with Ran-GDP. Could be part of a multicomponent system of cytosolic factors that assemble at the pore complex during nuclear import. The chain is Nuclear transport factor 2B from Arabidopsis thaliana (Mouse-ear cress).